Consider the following 240-residue polypeptide: Pyridoxine 5'-phosphate synthase (240 aa).

3-amino-2-oxopropyl phosphate is bound at residue Asn7. 1-deoxy-D-xylulose 5-phosphate is bound at residue 9 to 10; it reads DH. Arg18 serves as a coordination point for 3-amino-2-oxopropyl phosphate. His43 (proton acceptor) is an active-site residue. 1-deoxy-D-xylulose 5-phosphate contacts are provided by Arg45 and His50. Glu70 acts as the Proton acceptor in catalysis. A 1-deoxy-D-xylulose 5-phosphate-binding site is contributed by Thr100. The active-site Proton donor is His191. 3-amino-2-oxopropyl phosphate contacts are provided by residues Gly192 and 213 to 214; that span reads GH.

This sequence belongs to the PNP synthase family. As to quaternary structure, homooctamer; tetramer of dimers.

It is found in the cytoplasm. The enzyme catalyses 3-amino-2-oxopropyl phosphate + 1-deoxy-D-xylulose 5-phosphate = pyridoxine 5'-phosphate + phosphate + 2 H2O + H(+). It functions in the pathway cofactor biosynthesis; pyridoxine 5'-phosphate biosynthesis; pyridoxine 5'-phosphate from D-erythrose 4-phosphate: step 5/5. Catalyzes the complicated ring closure reaction between the two acyclic compounds 1-deoxy-D-xylulose-5-phosphate (DXP) and 3-amino-2-oxopropyl phosphate (1-amino-acetone-3-phosphate or AAP) to form pyridoxine 5'-phosphate (PNP) and inorganic phosphate. The protein is Pyridoxine 5'-phosphate synthase of Gloeothece citriformis (strain PCC 7424) (Cyanothece sp. (strain PCC 7424)).